The sequence spans 1943 residues: MASTSSSQPEKNRSHVPLCRLGTEPVSRTGAAEEPSGQRECYYYAPATSPHHHHHHHHQHHHHHRLKQHHRHHHHHHRLQHHHHHHQQQHNHQNQQMQHHWPSRLGPIGPWLGAMTAYRLLTISLLIGILCPHHVQGADPKFDPTTRMRLVLVPADAQVNSVIYRLRATDEEFDYPLTFEFVGDASASTVKVESLPCTKYNSVCQANIVLQRRLEPGRYYDFQVSVKDTKGGMTTQLCSITATNFTTPHDLIFPHKPGIIMIPEDAKRGTELDYVIARKNPLFQKPVYLELWGSPLFAIRQKIVSSETTEGTVFLLGPLDFEKQAMYHLTILANDAYAEPGQDSRNIAGMEIVVIVQDVQDQPPVFTSAPPVTKLPPGILPGDKILQVHAEDGDKGNPREVRYGLVSENNPFTSFFDINETSGEIFLMRPLEDIAFITHVGDPVLLTVIAEEVKVGRDEPPALASTVQLAFFLPDRTNSPPYFENDHYVSRVDENAPQGTALTFVDPYVPRVYDDDTGKNGVFSLTLLNNNGTFEISPNVAERSAGFLIRVRDNSMLDYEQQQSVQFQILAQELGPATNLSALVNVTVYINDVNDNAPVFEQPAYSVELPENMTAGTKVVQVLATDPDSGLGGKVRYTAILGYLNTSLNLDAETGLITVSTNKHGFDREVMPEYHLYVEARDMDGEGNRAQVPLIIKLIDVNDETPIFDKDLYEFILTHDLMGFTTTAVIHAEDKDATAPNNEVRYEIINGNYDNQFVLDKVTGELTVREKIHLRSKKNAKTRRRRQAGSDDEDTDIFILTARAYDLGVPVRFSTTTIRVYPPESRKRSVKFVVPGHNPDKAKTEETLSALSGGKVYIHNIRPLSPDEPGAKDIPAGNPGIKERSVVTATVIYDSSSVVDISEIQQRLSHHNNSYAIMPQDTSSTDTQYKAENKVLFWLLILLATLVALTILILLLCCICSWCPLYGAATKRIVNISRTEDDVHLVHREMANGKQTKSVQVAEWMGRRDAWSAEKPPDTRTKPTRWEFHDGREQLDEDVGRGQDIGEGDRRHIQSAEEQQRRVRIKHNRTAKDDLHLNFHNSRTNLINDRDVYMEDVIENRDLAGDREHITRTRVNRQEYARRKQYDSEVRHIDDDSMRRHEIDRGSDIDFNTAHNSLKSKRELFIKDGNVEILQLMTRDKTRDGLNLDDDNIYVNVPLKPAGNLSHPQLLMVDNTGKEILMRRFIEEQPDGKQIIREHYQIVPGATYIQSMPNEVQQGSTLKGDTFPLGKSGPNSIVYSQLEPEVKVIHTQPVQAGEGVSLDQQMQPAVSNQSLTHELEHSLKQQNALLRQILMEKEKLENAYTQHEVALETQSLPGQSMAIGTQTDCDAGTQTEGFDGVLDPEISLAKPSRRRARSENDESMSEDGYEYVRFNPPNSPEGVYWIKRRRTKKRPRQPRKRIVMVEEVKRKIRTPIKEEEEVQERKKRVPPKKPLRETKTSILRKQLSDESRKDQSRNGESQTGNRHRSESDSHNRDMFMEITDSMDELASPGSHSIRKIQVEKYYKHSDGDFDEDDTEYSIDSDGDEIVIRTNYPSRAQENERYRRQERTYAEPENPVDRKRPARKSSPTDSQPEAMPRLSRRDSSKRGSRKQTSSEPPHNRVSISKYESTVTENGRKLMSTSTEIVGSKRSLTDRSYQSETELAGLEHEERNVPKYMEWYYNKKKSSVSGRTSTESSKSQPSSKKKVGAAEKRVSKTRITAQPKDVEEYDETGGRYKPEPAPRKSPPKGSRLLKEDRALNKQHKPKIETDTNHPLLQHSEHRFERENALEVPAAPTKLPHYMYPETPPHAAAGGKESKSGRESKTSKEAKPKPSPIRENEVKVSNSKIYVEHRGTGHPTQKQLNASTLEDDHDSGIAMNSLLNSLGRRNPIAEKKSVFSIAYDDVSRVKKINSGGESPQYS.

Positions 1–102 are disordered; it reads MASTSSSQPE…QNQQMQHHWP (102 aa). Topologically, residues 1–934 are extracellular; that stretch reads MASTSSSQPE…TDTQYKAENK (934 aa). An N-linked (GlcNAc...) asparagine glycan is attached at N12. Residues 50–89 show a composition bias toward basic residues; it reads PHHHHHHHHQHHHHHRLKQHHRHHHHHHRLQHHHHHHQQQ. Positions 90–100 are enriched in low complexity; the sequence is HNHQNQQMQHH. 5 consecutive Cadherin domains span residues 238-366, 367-483, 484-600, 601-708, and 709-832; these read CSIT…PPVF, TSAP…PPYF, ENDH…APVF, EQPA…TPIF, and DKDL…SVKF. Residues N244, N419, N531, N579, N585, N612, and N645 are each glycosylated (N-linked (GlcNAc...) asparagine). N912 carries an N-linked (GlcNAc...) asparagine glycan. A helical transmembrane segment spans residues 935-955; that stretch reads VLFWLLILLATLVALTILILL. Residues 956 to 1943 lie on the Cytoplasmic side of the membrane; it reads LCCICSWCPL…NSGGESPQYS (988 aa). Disordered regions lie at residues 1038-1058, 1390-1442, 1458-1516, 1546-1695, and 1707-1895; these read DVGR…SAEE, KPSR…RKRI, EEEE…SHNR, YKHS…ERNV, and KSSV…DDHD. Residues 1047 to 1058 show a composition bias toward basic and acidic residues; that stretch reads EGDRRHIQSAEE. Over residues 1426–1442 the composition is skewed to basic residues; the sequence is IKRRRTKKRPRQPRKRI. Basic and acidic residues-rich tracts occupy residues 1486–1497 and 1507–1516; these read QLSDESRKDQSR and HRSESDSHNR. Residues 1552 to 1568 are compositionally biased toward acidic residues; it reads DFDEDDTEYSIDSDGDE. Over residues 1580–1602 the composition is skewed to basic and acidic residues; the sequence is QENERYRRQERTYAEPENPVDRK. Polar residues predominate over residues 1633 to 1667; that stretch reads KQTSSEPPHNRVSISKYESTVTENGRKLMSTSTEI. Low complexity predominate over residues 1709-1724; sequence SVSGRTSTESSKSQPS. Basic and acidic residues-rich tracts occupy residues 1754 to 1764, 1774 to 1793, 1800 to 1810, and 1837 to 1863; these read TGGRYKPEPAP, LLKE…ETDT, HSEHRFERENA, and KESK…ENEV. Positions 1879–1889 are enriched in polar residues; it reads HPTQKQLNAST.

As to expression, as cell intercalation proceeds, a row of stigmatophore cells surrounding the spiracular chamber show expression of Cad86C. Expression is regulated by the Abd-B cascade, requiring sal. Expressed in a broad region of the morphogenetic furrow and in clusters of cells posterior to the morphogenetic furrow. Weakly expressed in the epithelium of wing imaginal disks. In eye imaginal disk cells within the morphogenetic furrow, expression is localized to the apical region.

The protein localises to the cell membrane. Its function is as follows. Cadherins are calcium-dependent cell adhesion proteins. They preferentially interact with themselves in a homophilic manner in connecting cells. The sequence is that of Cadherin-86C (Cad86C) from Drosophila melanogaster (Fruit fly).